Reading from the N-terminus, the 31-residue chain is Photosystem II reaction center protein T (31 aa).

The chain crosses the membrane as a helical span at residues 3 to 23 (SFAYVLILTLAIATLFFAIAF).

The protein belongs to the PsbT family. As to quaternary structure, PSII is composed of 1 copy each of membrane proteins PsbA, PsbB, PsbC, PsbD, PsbE, PsbF, PsbH, PsbI, PsbJ, PsbK, PsbL, PsbM, PsbT, PsbX, PsbY, PsbZ, Psb30/Ycf12, peripheral proteins PsbO, CyanoQ (PsbQ), PsbU, PsbV and a large number of cofactors. It forms dimeric complexes.

Its subcellular location is the cellular thylakoid membrane. Its function is as follows. Found at the monomer-monomer interface of the photosystem II (PS II) dimer, plays a role in assembly and dimerization of PSII. PSII is a light-driven water plastoquinone oxidoreductase, using light energy to abstract electrons from H(2)O, generating a proton gradient subsequently used for ATP formation. This chain is Photosystem II reaction center protein T, found in Parasynechococcus marenigrum (strain WH8102).